A 249-amino-acid polypeptide reads, in one-letter code: Chymase (249 aa).

The N-terminal stretch at 1 to 19 (MHCLPLTLLLLLLCSRAEA) is a signal peptide. A propeptide spans 20-21 (EE) (activation peptide). Positions 22 to 245 (IIGGTESKPH…YRPWINKVLK (224 aa)) constitute a Peptidase S1 domain. Cys-51 and Cys-67 are oxidised to a cystine. Active-site charge relay system residues include His-66 and Asp-110. 2 disulfide bridges follow: Cys-144–Cys-209 and Cys-175–Cys-188. Catalysis depends on Ser-203, which acts as the Charge relay system.

Belongs to the peptidase S1 family. Granzyme subfamily.

It is found in the secreted. The protein localises to the cytoplasmic granule. It carries out the reaction Preferential cleavage: Phe-|-Xaa &gt; Tyr-|-Xaa &gt; Trp-|-Xaa &gt; Leu-|-Xaa.. Functionally, major secreted protease of mast cells with suspected roles in vasoactive peptide generation, extracellular matrix degradation, and regulation of gland secretion. The chain is Chymase (CMA1) from Canis lupus familiaris (Dog).